The following is a 481-amino-acid chain: Aspartyl/glutamyl-tRNA(Asn/Gln) amidotransferase subunit B (481 aa).

Belongs to the GatB/GatE family. GatB subfamily. Heterotrimer of A, B and C subunits.

The catalysed reaction is L-glutamyl-tRNA(Gln) + L-glutamine + ATP + H2O = L-glutaminyl-tRNA(Gln) + L-glutamate + ADP + phosphate + H(+). It carries out the reaction L-aspartyl-tRNA(Asn) + L-glutamine + ATP + H2O = L-asparaginyl-tRNA(Asn) + L-glutamate + ADP + phosphate + 2 H(+). Functionally, allows the formation of correctly charged Asn-tRNA(Asn) or Gln-tRNA(Gln) through the transamidation of misacylated Asp-tRNA(Asn) or Glu-tRNA(Gln) in organisms which lack either or both of asparaginyl-tRNA or glutaminyl-tRNA synthetases. The reaction takes place in the presence of glutamine and ATP through an activated phospho-Asp-tRNA(Asn) or phospho-Glu-tRNA(Gln). The chain is Aspartyl/glutamyl-tRNA(Asn/Gln) amidotransferase subunit B from Pseudomonas fluorescens (strain SBW25).